Consider the following 512-residue polypeptide: V-type proton ATPase subunit B (512 aa).

Residue R381 coordinates ATP. Residues 484 to 512 form a disordered region; that stretch reads LYGRDREQDDDEDEDEEDPDKSGDKLIDA. Residues 491-502 show a composition bias toward acidic residues; that stretch reads QDDDEDEDEEDP. Residues 503–512 show a composition bias toward basic and acidic residues; it reads DKSGDKLIDA.

It belongs to the ATPase alpha/beta chains family. In terms of assembly, V-ATPase is a heteromultimeric enzyme composed of a peripheral catalytic V1 complex (components A to H) attached to an integral membrane V0 proton pore complex (components: a, c, c', c'', d, e, f and VOA1).

The protein localises to the vacuole membrane. Non-catalytic subunit of the V1 complex of vacuolar(H+)-ATPase (V-ATPase), a multisubunit enzyme composed of a peripheral complex (V1) that hydrolyzes ATP and a membrane integral complex (V0) that translocates protons. Plays an important role in resistance to several stresses, as well as in autophagy and virulence. This is V-type proton ATPase subunit B from Candida albicans (strain SC5314 / ATCC MYA-2876) (Yeast).